We begin with the raw amino-acid sequence, 402 residues long: Multidrug resistance protein MdtH (402 aa).

Helical transmembrane passes span 13–33 (YFLL…FPLI), 45–65 (ALMV…LGIF), 99–116 (PWLL…GTLF), 139–159 (LLMM…SWLL), 165–185 (LVCA…AWLL), 214–234 (VLTL…LPIM), 244–264 (AVKW…YPIA), 277–297 (LMAG…VGNL), 300–322 (LFTL…ETLS), 340–360 (LGLA…FDMG), and 368–388 (LPWM…GWQF).

Belongs to the major facilitator superfamily. DHA1 family. MdtH (TC 2.A.1.2.21) subfamily.

The protein resides in the cell inner membrane. This Citrobacter koseri (strain ATCC BAA-895 / CDC 4225-83 / SGSC4696) protein is Multidrug resistance protein MdtH.